A 258-amino-acid polypeptide reads, in one-letter code: Protein T1 (258 aa).

Residues methionine 1–alanine 17 form the signal peptide. Residues asparagine 67, asparagine 151, and asparagine 172 are each glycosylated (N-linked (GlcNAc...) asparagine; by host).

Belongs to the poxviruses A41 family.

This Rabbit fibroma virus (strain Kasza) (RFV) protein is Protein T1.